Reading from the N-terminus, the 587-residue chain is Aspartate--tRNA ligase (587 aa).

Glu175 serves as a coordination point for L-aspartate. Residues 199–202 (QQFK) form an aspartate region. L-aspartate contacts are provided by Arg221 and His446. Residue 221–223 (RDE) participates in ATP binding. Residue Glu480 participates in ATP binding. Arg487 lines the L-aspartate pocket. ATP is bound at residue 532–535 (GVDR).

Belongs to the class-II aminoacyl-tRNA synthetase family. Type 1 subfamily. Homodimer.

It is found in the cytoplasm. The enzyme catalyses tRNA(Asp) + L-aspartate + ATP = L-aspartyl-tRNA(Asp) + AMP + diphosphate. In terms of biological role, catalyzes the attachment of L-aspartate to tRNA(Asp) in a two-step reaction: L-aspartate is first activated by ATP to form Asp-AMP and then transferred to the acceptor end of tRNA(Asp). This chain is Aspartate--tRNA ligase, found in Streptomyces avermitilis (strain ATCC 31267 / DSM 46492 / JCM 5070 / NBRC 14893 / NCIMB 12804 / NRRL 8165 / MA-4680).